Here is a 131-residue protein sequence, read N- to C-terminus: Ribosome-binding factor A (131 aa).

Belongs to the RbfA family. As to quaternary structure, monomer. Binds 30S ribosomal subunits, but not 50S ribosomal subunits or 70S ribosomes.

The protein resides in the cytoplasm. Its function is as follows. One of several proteins that assist in the late maturation steps of the functional core of the 30S ribosomal subunit. Associates with free 30S ribosomal subunits (but not with 30S subunits that are part of 70S ribosomes or polysomes). Required for efficient processing of 16S rRNA. May interact with the 5'-terminal helix region of 16S rRNA. This Christiangramia forsetii (strain DSM 17595 / CGMCC 1.15422 / KT0803) (Gramella forsetii) protein is Ribosome-binding factor A.